Here is a 349-residue protein sequence, read N- to C-terminus: Beta-hexosaminidase (349 aa).

Substrate-binding positions include Asp64, Arg72, Arg138, and 168-169 (KH). The active-site Proton donor/acceptor is the His181. Asp252 acts as the Nucleophile in catalysis.

Belongs to the glycosyl hydrolase 3 family. NagZ subfamily.

Its subcellular location is the cytoplasm. It catalyses the reaction Hydrolysis of terminal non-reducing N-acetyl-D-hexosamine residues in N-acetyl-beta-D-hexosaminides.. It participates in cell wall biogenesis; peptidoglycan recycling. Functionally, plays a role in peptidoglycan recycling by cleaving the terminal beta-1,4-linked N-acetylglucosamine (GlcNAc) from peptide-linked peptidoglycan fragments, giving rise to free GlcNAc, anhydro-N-acetylmuramic acid and anhydro-N-acetylmuramic acid-linked peptides. The polypeptide is Beta-hexosaminidase (Nitrosospira multiformis (strain ATCC 25196 / NCIMB 11849 / C 71)).